The primary structure comprises 554 residues: (E)-nerolidol synthase TPS18VF (554 aa).

(2E,6E)-farnesyl diphosphate is bound by residues Arg-276, Asp-313, Asp-317, Arg-455, and Asp-458. Residues Asp-313 and Asp-317 each contribute to the Mg(2+) site. Positions 313-317 (DDIFD) match the DDXXD motif motif. Residues Asp-458, Ser-462, and Glu-466 each coordinate Mg(2+).

The protein belongs to the terpene synthase family. Tpsb subfamily. It depends on Mg(2+) as a cofactor. The cofactor is Mn(2+). In terms of tissue distribution, highly expressed in glandular trichomes.

The catalysed reaction is (2E,6E)-farnesyl diphosphate + H2O = (6E)-nerolidol + diphosphate. The enzyme catalyses (2E)-geranyl diphosphate + H2O = (S)-linalool + diphosphate. It participates in secondary metabolite biosynthesis; terpenoid biosynthesis. Functionally, involved in sesquiterpene olefins biosynthesis, constituants of cannabinoids and terpenoids-rich resins. Catalyzes primarily the conversion of (2E)-farnesyl diphosphate to (E)-nerolidol, and the conversion of (2E)-geranyl diphosphate to (+)linalool. This Cannabis sativa (Hemp) protein is (E)-nerolidol synthase TPS18VF.